We begin with the raw amino-acid sequence, 470 residues long: Nuclear receptor ROR-beta (470 aa).

Positions 18–93 form a DNA-binding region, nuclear receptor; the sequence is VIPCKICGDK…LGMSRDAVKF (76 aa). 2 consecutive NR C4-type zinc fingers follow at residues 21–41 and 57–81; these read CKICGDKSSGIHYGVITCEGC and CPRQRNCLIDRTNRNRCQHCRLQKC. Residues 104-117 show a composition bias toward basic and acidic residues; it reads LYAEVQKHQQRLQE. The tract at residues 104-127 is disordered; it reads LYAEVQKHQQRLQEQRQQQSGEAE. The region spanning 222 to 460 is the NR LBD domain; that stretch reads EIDRIAQNII…TLFPPLYKEL (239 aa). The AF-2 motif lies at 456 to 461; the sequence is LYKELF.

This sequence belongs to the nuclear hormone receptor family. NR1 subfamily. As to quaternary structure, monomer. Interacts with CRX. As to expression, isoform 2 expressed with circadian rhythm in eye and pineal gland. Isoform 1 expressed in retina cortex, thalamus, and hypothalamus.

It localises to the nucleus. Its subcellular location is the nucleoplasm. Its function is as follows. Nuclear receptor that binds DNA as a monomer to ROR response elements (RORE) containing a single core motif half-site 5'-AGGTCA-3' preceded by a short A-T-rich sequence. Considered to have intrinsic transcriptional activity, have some natural ligands such as all-trans retinoic acid (ATRA) and other retinoids which act as inverse agonists repressing the transcriptional activity. Required for normal postnatal development of rod and cone photoreceptor cells. Modulates rod photoreceptors differentiation at least by inducing the transcription factor NRL-mediated pathway. In cone photoreceptor cells, regulates transcription of OPN1SW. Involved in the regulation of the period length and stability of the circadian rhythm. May control cytoarchitectural patterning of neocortical neurons during development. May act in a dose-dependent manner to regulate barrel formation upon innervation of layer IV neurons by thalamocortical axons. May play a role in the suppression of osteoblastic differentiation through the inhibition of RUNX2 transcriptional activity. In terms of biological role, critical for hindlimb motor control and for the differentiation of amacrine and horizontal cells in the retina. Regulates the expression of PTF1A synergistically with FOXN4. This chain is Nuclear receptor ROR-beta (Rorb), found in Rattus norvegicus (Rat).